A 157-amino-acid polypeptide reads, in one-letter code: Small ribosomal subunit protein uS7 (157 aa).

Belongs to the universal ribosomal protein uS7 family. As to quaternary structure, part of the 30S ribosomal subunit. Contacts proteins S9 and S11.

Functionally, one of the primary rRNA binding proteins, it binds directly to 16S rRNA where it nucleates assembly of the head domain of the 30S subunit. Is located at the subunit interface close to the decoding center, probably blocks exit of the E-site tRNA. This Francisella tularensis subsp. tularensis (strain FSC 198) protein is Small ribosomal subunit protein uS7.